We begin with the raw amino-acid sequence, 24 residues long: FLPILASLAAKLGPKLFCLVTKKC.

Cysteines 18 and 24 form a disulfide.

In terms of tissue distribution, expressed by the skin glands.

It localises to the secreted. Antibacterial activity against Gram-positive bacterium S.aureus and Gram-negative bacterium E.coli. Has moderate antifungal activity against C.albicans and strong hemolytic activity. The sequence is that of Brevinin-1BYb from Rana boylii (Foothill yellow-legged frog).